A 311-amino-acid chain; its full sequence is Olfactory receptor 10G8 (311 aa).

Topologically, residues 1–23 are extracellular; sequence MSNASLLTAFILMGLPHAPALDA. A glycan (N-linked (GlcNAc...) asparagine) is linked at asparagine 3. A helical transmembrane segment spans residues 24-44; the sequence is PLFGVFLVVYVLTVLGNLLIL. Topologically, residues 45-52 are cytoplasmic; that stretch reads LVIRVDSH. Residues 53–73 form a helical membrane-spanning segment; it reads LHTTMYYFLTNLSFIDMWFST. Residues 74–98 lie on the Extracellular side of the membrane; the sequence is VTVPKLLMTLVFPSGRAISFHSCMA. Cysteines 96 and 188 form a disulfide. The helical transmembrane segment at 99–119 threads the bilayer; the sequence is QLYFFHFLGGTECFLYRVMSC. Topologically, residues 120-138 are cytoplasmic; it reads DRYLAISYPLRYTSMMTGR. Residues 139-159 traverse the membrane as a helical segment; sequence SCTLLATSTWLSGSLHSAVQA. The Extracellular portion of the chain corresponds to 160-196; that stretch reads ILTFHLPYCGPNWIQHYLCDAPPILKLACADTSAIET. Residues 197–216 form a helical membrane-spanning segment; the sequence is VIFVTVGIVASGCFVLIVLS. The Cytoplasmic portion of the chain corresponds to 217 to 236; that stretch reads YVSIVCSILRIRTSEGKHRA. The helical transmembrane segment at 237 to 257 threads the bilayer; the sequence is FQTCASHCIVVLCFFGPGLFI. At 258–268 the chain is on the extracellular side; it reads YLRPGSRKAVD. Residues 269-289 form a helical membrane-spanning segment; it reads GVVAVFYTVLTPLLNPVVYTL. Over 290–311 the chain is Cytoplasmic; the sequence is RNKEVKKALLKLKDKVAHSQSK.

It belongs to the G-protein coupled receptor 1 family.

Its subcellular location is the cell membrane. Its function is as follows. Odorant receptor. The sequence is that of Olfactory receptor 10G8 (OR10G8) from Homo sapiens (Human).